The primary structure comprises 68 residues: MPQLNTTVWPTIITSMLLTLFLLMQLKTLNMYYHPPASPKLMNIKPHNNPWEHKWTKIYSLHSLPLQS.

The chain crosses the membrane as a helical span at residues 8–24; it reads VWPTIITSMLLTLFLLM. N6-acetyllysine; alternate is present on Lys54. Lys54 is subject to N6-succinyllysine; alternate. Lys57 is modified (N6-acetyllysine).

The protein belongs to the ATPase protein 8 family. In terms of assembly, component of the ATP synthase complex composed at least of ATP5F1A/subunit alpha, ATP5F1B/subunit beta, ATP5MC1/subunit c (homooctomer), MT-ATP6/subunit a, MT-ATP8/subunit 8, ATP5ME/subunit e, ATP5MF/subunit f, ATP5MG/subunit g, ATP5MK/subunit k, ATP5MJ/subunit j, ATP5F1C/subunit gamma, ATP5F1D/subunit delta, ATP5F1E/subunit epsilon, ATP5PF/subunit F6, ATP5PB/subunit b, ATP5PD/subunit d, ATP5PO/subunit OSCP. ATP synthase complex consists of a soluble F(1) head domain (subunits alpha(3) and beta(3)) - the catalytic core - and a membrane F(0) domain - the membrane proton channel (subunits c, a, 8, e, f, g, k and j). These two domains are linked by a central stalk (subunits gamma, delta, and epsilon) rotating inside the F1 region and a stationary peripheral stalk (subunits F6, b, d, and OSCP). Interacts with PRICKLE3.

The protein localises to the mitochondrion membrane. Functionally, subunit 8, of the mitochondrial membrane ATP synthase complex (F(1)F(0) ATP synthase or Complex V) that produces ATP from ADP in the presence of a proton gradient across the membrane which is generated by electron transport complexes of the respiratory chain. ATP synthase complex consist of a soluble F(1) head domain - the catalytic core - and a membrane F(1) domain - the membrane proton channel. These two domains are linked by a central stalk rotating inside the F(1) region and a stationary peripheral stalk. During catalysis, ATP synthesis in the catalytic domain of F(1) is coupled via a rotary mechanism of the central stalk subunits to proton translocation. In vivo, can only synthesize ATP although its ATP hydrolase activity can be activated artificially in vitro. Part of the complex F(0) domain. The protein is ATP synthase F(0) complex subunit 8 of Symphalangus syndactylus (Siamang).